The chain runs to 432 residues: Serine hydroxymethyltransferase (432 aa).

(6S)-5,6,7,8-tetrahydrofolate-binding positions include Leu127 and 131–133 (GHL). At Lys236 the chain carries N6-(pyridoxal phosphate)lysine.

The protein belongs to the SHMT family. Homodimer. Pyridoxal 5'-phosphate serves as cofactor.

It localises to the cytoplasm. The catalysed reaction is (6R)-5,10-methylene-5,6,7,8-tetrahydrofolate + glycine + H2O = (6S)-5,6,7,8-tetrahydrofolate + L-serine. The protein operates within one-carbon metabolism; tetrahydrofolate interconversion. Its pathway is amino-acid biosynthesis; glycine biosynthesis; glycine from L-serine: step 1/1. Its function is as follows. Catalyzes the reversible interconversion of serine and glycine with tetrahydrofolate (THF) serving as the one-carbon carrier. This reaction serves as the major source of one-carbon groups required for the biosynthesis of purines, thymidylate, methionine, and other important biomolecules. Also exhibits THF-independent aldolase activity toward beta-hydroxyamino acids, producing glycine and aldehydes, via a retro-aldol mechanism. The polypeptide is Serine hydroxymethyltransferase (Rhizobium johnstonii (strain DSM 114642 / LMG 32736 / 3841) (Rhizobium leguminosarum bv. viciae)).